A 239-amino-acid polypeptide reads, in one-letter code: Ribonuclease PH (239 aa).

Residues Arg86 and 124-126 (GTR) contribute to the phosphate site.

Belongs to the RNase PH family. As to quaternary structure, homohexameric ring arranged as a trimer of dimers.

It catalyses the reaction tRNA(n+1) + phosphate = tRNA(n) + a ribonucleoside 5'-diphosphate. Functionally, phosphorolytic 3'-5' exoribonuclease that plays an important role in tRNA 3'-end maturation. Removes nucleotide residues following the 3'-CCA terminus of tRNAs; can also add nucleotides to the ends of RNA molecules by using nucleoside diphosphates as substrates, but this may not be physiologically important. Probably plays a role in initiation of 16S rRNA degradation (leading to ribosome degradation) during starvation. This is Ribonuclease PH from Rickettsia bellii (strain OSU 85-389).